We begin with the raw amino-acid sequence, 288 residues long: Acetyl-coenzyme A carboxylase carboxyl transferase subunit beta (288 aa).

The CoA carboxyltransferase N-terminal domain occupies 32–288; sequence LFAKCPACKH…LELHTEVENV (257 aa). Residues Cys36, Cys39, Cys54, and Cys57 each coordinate Zn(2+). The segment at 36 to 57 adopts a C4-type zinc-finger fold; it reads CPACKHTIYQKDLGKNKVCPNC.

This sequence belongs to the AccD/PCCB family. Acetyl-CoA carboxylase is a heterohexamer composed of biotin carboxyl carrier protein (AccB), biotin carboxylase (AccC) and two subunits each of ACCase subunit alpha (AccA) and ACCase subunit beta (AccD). It depends on Zn(2+) as a cofactor.

Its subcellular location is the cytoplasm. It catalyses the reaction N(6)-carboxybiotinyl-L-lysyl-[protein] + acetyl-CoA = N(6)-biotinyl-L-lysyl-[protein] + malonyl-CoA. It participates in lipid metabolism; malonyl-CoA biosynthesis; malonyl-CoA from acetyl-CoA: step 1/1. Functionally, component of the acetyl coenzyme A carboxylase (ACC) complex. Biotin carboxylase (BC) catalyzes the carboxylation of biotin on its carrier protein (BCCP) and then the CO(2) group is transferred by the transcarboxylase to acetyl-CoA to form malonyl-CoA. The protein is Acetyl-coenzyme A carboxylase carboxyl transferase subunit beta of Lactococcus lactis subsp. lactis (strain IL1403) (Streptococcus lactis).